A 698-amino-acid polypeptide reads, in one-letter code: Polyribonucleotide nucleotidyltransferase (698 aa).

Residues Asp-490 and Asp-496 each contribute to the Mg(2+) site. Residues 557–616 (PKVVTMTIKPDKIRDVIGPGGKKINEIIDETGVKLDIEQDGTIFIGAVDQAMINRAREII) form the KH domain. The 69-residue stretch at 626 to 694 (GQTYQATVKR…KQGRVNASHR (69 aa)) folds into the S1 motif domain.

It belongs to the polyribonucleotide nucleotidyltransferase family. Requires Mg(2+) as cofactor.

It is found in the cytoplasm. The enzyme catalyses RNA(n+1) + phosphate = RNA(n) + a ribonucleoside 5'-diphosphate. Involved in mRNA degradation. Catalyzes the phosphorolysis of single-stranded polyribonucleotides processively in the 3'- to 5'-direction. This chain is Polyribonucleotide nucleotidyltransferase, found in Staphylococcus aureus (strain MRSA252).